A 233-amino-acid chain; its full sequence is MANVALIGCTGMVGAHILTSLIANPAVTRIDTISRRTPQAASSAPQAKLTTIVSTDTSKWASELSSLTPIPSIFISALGTTRAAAGSFENQYKLDHDLNLEMAKAARDAGTKVYVLISSSGADVKSNFAYTRMKGEIEEGVKALGFERTVILRPGLIAGQREESRPAEAVARFFAGALGKVHSSLKDGWAQESDVIGKAAVNAGLKALNGEVPAGSEKVWYLYGSDIIQHGKE.

The N-terminal 36 residues, 1 to 36 (MANVALIGCTGMVGAHILTSLIANPAVTRIDTISRR), are a transit peptide targeting the mitochondrion.

Belongs to the FMP52 family.

It is found in the mitochondrion outer membrane. The chain is Protein fmp52, mitochondrial (fmp52) from Emericella nidulans (strain FGSC A4 / ATCC 38163 / CBS 112.46 / NRRL 194 / M139) (Aspergillus nidulans).